The following is a 186-amino-acid chain: Protein GrpE (186 aa).

Basic and acidic residues-rich tracts occupy residues 1 to 13 and 23 to 34; these read MSDN…EEQH and EETHQAEDAVEH. Residues 1–34 form a disordered region; that stretch reads MSDNKTELNEEQHNATAEGEVSEETHQAEDAVEH.

It belongs to the GrpE family. Homodimer.

It localises to the cytoplasm. Its function is as follows. Participates actively in the response to hyperosmotic and heat shock by preventing the aggregation of stress-denatured proteins, in association with DnaK and GrpE. It is the nucleotide exchange factor for DnaK and may function as a thermosensor. Unfolded proteins bind initially to DnaJ; upon interaction with the DnaJ-bound protein, DnaK hydrolyzes its bound ATP, resulting in the formation of a stable complex. GrpE releases ADP from DnaK; ATP binding to DnaK triggers the release of the substrate protein, thus completing the reaction cycle. Several rounds of ATP-dependent interactions between DnaJ, DnaK and GrpE are required for fully efficient folding. In Hydrogenovibrio crunogenus (strain DSM 25203 / XCL-2) (Thiomicrospira crunogena), this protein is Protein GrpE.